Here is a 691-residue protein sequence, read N- to C-terminus: Ribonucleoprotein PTB-binding 2 (691 aa).

Positions 1–30 (MAAAAGDGGGEGGAGLGSAAGLGPGPGLRG) are enriched in gly residues. The interval 1-47 (MAAAAGDGGGEGGAGLGSAAGLGPGPGLRGQGPSAEAHEGAPDPMPA) is disordered. Residue Ala2 is modified to N-acetylalanine. 3 RRM domains span residues 69 to 140 (RKIL…LQPT), 142 to 220 (ALLC…WMDV), and 231 to 309 (KCLC…FCAP). Disordered regions lie at residues 492–522 (PNQH…EGNF) and 543–574 (GHHK…GEPP). The span at 548–569 (QQSQPKGTEISSGAASKNQTSL) shows a compositional bias: polar residues.

As to quaternary structure, interacts with PTBP1 and RAVER1.

It localises to the nucleus. Its subcellular location is the cytoplasm. In terms of biological role, may bind single-stranded nucleic acids. In Homo sapiens (Human), this protein is Ribonucleoprotein PTB-binding 2 (RAVER2).